A 2178-amino-acid chain; its full sequence is Genome polyprotein (2178 aa).

The tract at residues 1 to 20 is disordered; that stretch reads MGAQVSTQKSGSHENQNILT. Gly2 carries the N-myristoyl glycine; by host lipid modification. The Cytoplasmic portion of the chain corresponds to 2–1490; it reads GAQVSTQKSG…AVNQASMIIN (1489 aa). The tract at residues 564 to 584 is amphipathic alpha-helix; that stretch reads ALTEGLSDELEEVIVEKTKQT. Catalysis depends on for protease 2A activity residues His875 and Asp893. Cys910 and Cys912 together coordinate Zn(2+). The active-site For protease 2A activity is the Cys964. Zn(2+) contacts are provided by Cys970 and His972. The tract at residues 1100–1172 is membrane-binding; that stretch reads NDGWFRKFND…HDSNPTQEKR (73 aa). Positions 1100-1238 are oligomerization; sequence NDGWFRKFND…TPGSGKSLTT (139 aa). An RNA-binding region spans residues 1121 to 1125; the sequence is ANKIS. The SF3 helicase domain occupies 1204-1360; that stretch reads KNKITNYMQF…STYTKNGKLN (157 aa). Zn(2+)-binding residues include Cys1368, Cys1371, Cys1380, and Cys1385. The segment at 1368–1385 adopts a C4-type zinc-finger fold; it reads CKDCHQPSNFKKCCPLVC. The interval 1412–1419 is RNA-binding; that stretch reads DYKNKVKI. Residues 1423 to 1428 form an oligomerization region; that stretch reads LEVLFQ. The stretch at 1491-1506 is an intramembrane region; that stretch reads TILMFVSTLGIVYVIY. The Cytoplasmic portion of the chain corresponds to 1507–2178; it reads KLFAQTQGPY…VLRRRWLDLF (672 aa). Tyr1516 bears the O-(5'-phospho-RNA)-tyrosine mark. Residues 1537 to 1714 form the Peptidase C3 domain; the sequence is GPNTEFALSL…FSAQLKKQYF (178 aa). Active-site for protease 3C activity residues include His1576, Glu1607, and Cys1682. In terms of domain architecture, RdRp catalytic spans 1946-2059; sequence HLMAFDYSNF…SYPFELDSNI (114 aa). Mg(2+) is bound by residues Asp1951 and Asp2045.

The protein belongs to the picornaviruses polyprotein family. Interacts with capsid protein VP1 and capsid protein VP3 to form heterotrimeric protomers. In terms of assembly, interacts with capsid protein VP0, and capsid protein VP3 to form heterotrimeric protomers. Five protomers subsequently associate to form pentamers which serve as building blocks for the capsid. Interacts with capsid protein VP2, capsid protein VP3 and capsid protein VP4 following cleavage of capsid protein VP0. As to quaternary structure, interacts with capsid protein VP1 and capsid protein VP3 in the mature capsid. Interacts with capsid protein VP0 and capsid protein VP1 to form heterotrimeric protomers. Five protomers subsequently associate to form pentamers which serve as building blocks for the capsid. Interacts with capsid protein VP4 in the mature capsid. Interacts with protein 2C; this interaction may be important for virion morphogenesis. In terms of assembly, interacts with capsid protein VP1 and capsid protein VP3. As to quaternary structure, homodimer. Homohexamer; forms a hexameric ring structure with 6-fold symmetry characteristic of AAA+ ATPases. Interacts (via N-terminus) with host RTN3 (via reticulon domain); this interaction is important for viral replication. Interacts with capsid protein VP3; this interaction may be important for virion morphogenesis. In terms of assembly, interacts with protein 3CD. As to quaternary structure, homodimer. Interacts with host GBF1. Interacts (via GOLD domain) with host ACBD3 (via GOLD domain); this interaction allows the formation of a viral protein 3A/ACBD3 heterotetramer with a 2:2 stoichiometry, which will stimulate the recruitment of host PI4KB in order to synthesize PI4P at the viral RNA replication sites. Interacts with RNA-directed RNA polymerase. In terms of assembly, interacts with protein 3AB and with RNA-directed RNA polymerase. As to quaternary structure, interacts with Viral protein genome-linked and with protein 3CD. Mg(2+) is required as a cofactor. Post-translationally, specific enzymatic cleavages in vivo by the viral proteases yield processing intermediates and the mature proteins. In terms of processing, myristoylation is required for the formation of pentamers during virus assembly. Further assembly of 12 pentamers and a molecule of genomic RNA generates the provirion. During virion maturation, immature virions are rendered infectious following cleavage of VP0 into VP4 and VP2. This maturation seems to be an autocatalytic event triggered by the presence of RNA in the capsid and it is followed by a conformational change infectious virion. Post-translationally, myristoylation is required during RNA encapsidation and formation of the mature virus particle. In terms of processing, VPg is uridylylated by the polymerase into VPg-pUpU. This acts as a nucleotide-peptide primer for the genomic RNA replication.

The protein localises to the virion. Its subcellular location is the host cytoplasm. It localises to the host cytoplasmic vesicle membrane. It is found in the host nucleus. It catalyses the reaction a ribonucleoside 5'-triphosphate + H2O = a ribonucleoside 5'-diphosphate + phosphate + H(+). The catalysed reaction is Selective cleavage of Tyr-|-Gly bond in the picornavirus polyprotein.. The enzyme catalyses RNA(n) + a ribonucleoside 5'-triphosphate = RNA(n+1) + diphosphate. It carries out the reaction Selective cleavage of Gln-|-Gly bond in the poliovirus polyprotein. In other picornavirus reactions Glu may be substituted for Gln, and Ser or Thr for Gly.. With respect to regulation, replication or transcription is subject to high level of random mutations by the nucleotide analog ribavirin. Forms an icosahedral capsid of pseudo T=3 symmetry with capsid proteins VP2 and VP3. The capsid is 300 Angstroms in diameter, composed of 60 copies of each capsid protein and enclosing the viral positive strand RNA genome. Capsid protein VP1 mainly forms the vertices of the capsid. Capsid protein VP1 interacts with host cell receptor to provide virion attachment to target host cells. This attachment induces virion internalization. Tyrosine kinases are probably involved in the entry process. After binding to its receptor, the capsid undergoes conformational changes. Capsid protein VP1 N-terminus (that contains an amphipathic alpha-helix) and capsid protein VP4 are externalized. Together, they shape a pore in the host membrane through which viral genome is translocated to host cell cytoplasm. Its function is as follows. Forms an icosahedral capsid of pseudo T=3 symmetry with capsid proteins VP2 and VP3. The capsid is 300 Angstroms in diameter, composed of 60 copies of each capsid protein and enclosing the viral positive strand RNA genome. In terms of biological role, lies on the inner surface of the capsid shell. After binding to the host receptor, the capsid undergoes conformational changes. Capsid protein VP4 is released, Capsid protein VP1 N-terminus is externalized, and together, they shape a pore in the host membrane through which the viral genome is translocated into the host cell cytoplasm. Functionally, component of immature procapsids, which is cleaved into capsid proteins VP4 and VP2 after maturation. Allows the capsid to remain inactive before the maturation step. Cysteine protease that cleaves viral polyprotein and specific host proteins. It is responsible for the autocatalytic cleavage between the P1 and P2 regions, which is the first cleavage occurring in the polyprotein. Also cleaves the host translation initiation factor EIF4G1, in order to shut down the capped cellular mRNA translation. Inhibits the host nucleus-cytoplasm protein and RNA trafficking by cleaving host members of the nuclear pores. Counteracts stress granule formation probably by antagonizing its assembly or promoting its dissassembly. Its function is as follows. Plays an essential role in the virus replication cycle by acting as a viroporin. Creates a pore in the host endoplasmic reticulum and as a consequence releases Ca2+ in the cytoplasm of infected cell. In turn, high levels of cytoplasmic calcium may trigger membrane trafficking and transport of viral ER-associated proteins to viroplasms, sites of viral genome replication. In terms of biological role, induces and associates with structural rearrangements of intracellular membranes. Displays RNA-binding, nucleotide binding and NTPase activities. May play a role in virion morphogenesis and viral RNA encapsidation by interacting with the capsid protein VP3. Functionally, localizes the viral replication complex to the surface of membranous vesicles. Together with protein 3CD binds the Cis-Active RNA Element (CRE) which is involved in RNA synthesis initiation. Acts as a cofactor to stimulate the activity of 3D polymerase, maybe through a nucleid acid chaperone activity. Localizes the viral replication complex to the surface of membranous vesicles. It inhibits host cell endoplasmic reticulum-to-Golgi apparatus transport and causes the disassembly of the Golgi complex, possibly through GBF1 interaction. This would result in depletion of MHC, trail receptors and IFN receptors at the host cell surface. Plays an essential role in viral RNA replication by recruiting ACBD3 and PI4KB at the viral replication sites, thereby allowing the formation of the rearranged membranous structures where viral replication takes place. Its function is as follows. Acts as a primer for viral RNA replication and remains covalently bound to viral genomic RNA. VPg is uridylylated prior to priming replication into VPg-pUpU. The oriI viral genomic sequence may act as a template for this. The VPg-pUpU is then used as primer on the genomic RNA poly(A) by the RNA-dependent RNA polymerase to replicate the viral genome. During genome replication, the VPg-RNA linkage is removed by the host TDP2, thereby accelerating replication. During the late stage of the replication cycle, host TDP2 is excluded from sites of viral RNA synthesis and encapsidation, allowing for the generation of progeny virions. In terms of biological role, involved in the viral replication complex and viral polypeptide maturation. It exhibits protease activity with a specificity and catalytic efficiency that is different from protease 3C. Protein 3CD lacks polymerase activity. Protein 3CD binds to the 5'UTR of the viral genome. Functionally, replicates the viral genomic RNA on the surface of intracellular membranes. May form linear arrays of subunits that propagate along a strong head-to-tail interaction called interface-I. Covalently attaches UMP to a tyrosine of VPg, which is used to prime RNA synthesis. The positive stranded RNA genome is first replicated at virus induced membranous vesicles, creating a dsRNA genomic replication form. This dsRNA is then used as template to synthesize positive stranded RNA genomes. ss(+)RNA genomes are either translated, replicated or encapsidated. Major viral protease that mediates proteolytic processing of the polyprotein. Cleaves host EIF5B, contributing to host translation shutoff. Also cleaves host PABPC1, contributing to host translation shutoff. Cleaves host NLRP1, triggers host N-glycine-mediated degradation of the autoinhibitory NLRP1 N-terminal fragment. The protein is Genome polyprotein of Homo sapiens (Human).